The following is a 628-amino-acid chain: NUAK family SNF1-like kinase 2 (628 aa).

M1 bears the N-acetylmethionine mark. The 251-residue stretch at 53–303 (YEFLETLGKG…LEDVASHWWV (251 aa)) folds into the Protein kinase domain. Residues 59–67 (LGKGTYGKV) and K81 contribute to the ATP site. D175 functions as the Proton acceptor in the catalytic mechanism. T208 carries the phosphothreonine modification. Disordered stretches follow at residues 355 to 492 (KQHA…PQAS) and 522 to 570 (GSLD…PLRG). A compositionally biased stretch (pro residues) spans 428 to 444 (ELSPIPVSPGQAAPPLP). Phosphoserine is present on S435. Low complexity predominate over residues 457 to 469 (SGYYSSPEPSESG). S523, S544, S547, and S573 each carry phosphoserine.

It belongs to the protein kinase superfamily. CAMK Ser/Thr protein kinase family. SNF1 subfamily. It depends on Mg(2+) as a cofactor. In terms of processing, phosphorylated at Thr-208 by STK11/LKB1 in complex with STE20-related adapter-alpha (STRADA) pseudo kinase and CAB39. Autophosphorylation is also possible at Thr-208.

The catalysed reaction is L-seryl-[protein] + ATP = O-phospho-L-seryl-[protein] + ADP + H(+). The enzyme catalyses L-threonyl-[protein] + ATP = O-phospho-L-threonyl-[protein] + ADP + H(+). Activated by phosphorylation on Thr-208. Stress-activated kinase involved in tolerance to glucose starvation. Induces cell-cell detachment by increasing F-actin conversion to G-actin. Expression is induced by CD95 or TNF-alpha, via NF-kappa-B. Protects cells from CD95-mediated apoptosis and is required for the increased motility and invasiveness of CD95-activated tumor cells. Phosphorylates LATS1 and LATS2. Plays a key role in neural tube closure during embryonic development through LATS2 phosphorylation and regulation of the nuclear localization of YAP1 a critical downstream regulatory target in the Hippo signaling pathway. The chain is NUAK family SNF1-like kinase 2 from Pongo abelii (Sumatran orangutan).